The chain runs to 222 residues: Germin-like protein subfamily 1 member 14 (222 aa).

An N-terminal signal peptide occupies residues 1-22 (MRFSKSLILITLSALVISFAEA). A disulfide bridge connects residues C32 and C49. In terms of domain architecture, Cupin type-1 spans 63–214 (SGLNQAGTTN…AFQLDVNVVK (152 aa)). The N-linked (GlcNAc...) asparagine glycan is linked to N78. The Mn(2+) site is built by H111, H113, E118, and H160.

This sequence belongs to the germin family. As to quaternary structure, oligomer (believed to be a pentamer but probably hexamer).

Its subcellular location is the secreted. The protein localises to the extracellular space. It is found in the apoplast. In terms of biological role, may play a role in plant defense. Probably has no oxalate oxidase activity even if the active site is conserved. This is Germin-like protein subfamily 1 member 14 from Arabidopsis thaliana (Mouse-ear cress).